Reading from the N-terminus, the 695-residue chain is Scarecrow-like protein 31 (695 aa).

Disordered stretches follow at residues 105–136 and 234–260; these read VISD…NSSN and ISKT…RSKQ. Low complexity predominate over residues 113–136; sequence SSIPNNSITTSSSSNSGDYSNSSN. A coiled-coil region spans residues 233–266; sequence AISKTRKNHHEREEEEDDLEEARRRSKQFAVNEE. In terms of domain architecture, GRAS spans 306–693; it reads AKKKSRAVDF…RILFSSSCWV (388 aa). A leucine repeat I (LRI) region spans residues 313 to 377; it reads VDFRTLLTLC…EGSTGTMIQS (65 aa). The tract at residues 396–461 is VHIID; it reads YSVFLSASPF…PGLRKLRITG (66 aa). Residues 427–431 carry the VHIID motif; sequence LHIVD. Residues 477-509 are leucine repeat II (LRII); sequence DTGRRLTEYCKRFGVPFEYNAIASKNWETIKME. Residues 519 to 614 form a PFYRE region; the sequence is LAVNAVLRFK…GEFYGREVMN (96 aa). The SAW stretch occupies residues 617–693; it reads ACEGVDRVER…RILFSSSCWV (77 aa).

This sequence belongs to the GRAS family. As to expression, expressed in seedlings, roots, cotyledons, leaves and sepals.

It is found in the nucleus. Probable transcription factor involved in plant development. The polypeptide is Scarecrow-like protein 31 (SCL31) (Arabidopsis thaliana (Mouse-ear cress)).